The primary structure comprises 605 residues: Poly [ADP-ribose] polymerase 2-B (605 aa).

A disordered region spans residues 96 to 122; that stretch reads NAAAAAAVTDGGDQDKTKSAKDDDGDD. Positions 108 to 122 are enriched in basic and acidic residues; it reads DQDKTKSAKDDDGDD. The 108-residue stretch at 153–260 folds into the WGR domain; the sequence is AYHVLQVGDE…TKLETRTASF (108 aa). The 121-residue stretch at 250-370 folds into the PARP alpha-helical domain; the sequence is ETKLETRTAS…EIEIAIKLLE (121 aa). Residues 378–605 enclose the PARP catalytic domain; it reads HPLYARYKQF…NVNFNFKRWG (228 aa).

The protein belongs to the ARTD/PARP family.

The protein resides in the nucleus. It catalyses the reaction NAD(+) + (ADP-D-ribosyl)n-acceptor = nicotinamide + (ADP-D-ribosyl)n+1-acceptor + H(+).. The enzyme catalyses L-aspartyl-[protein] + NAD(+) = 4-O-(ADP-D-ribosyl)-L-aspartyl-[protein] + nicotinamide. It carries out the reaction L-glutamyl-[protein] + NAD(+) = 5-O-(ADP-D-ribosyl)-L-glutamyl-[protein] + nicotinamide. In terms of biological role, involved in the base excision repair (BER) pathway, by catalyzing the poly(ADP-ribosyl)ation of a limited number of acceptor proteins involved in chromatin architecture and in DNA metabolism. This modification follows DNA damages and appears as an obligatory step in a detection/signaling pathway leading to the reparation of DNA strand breaks. The sequence is that of Poly [ADP-ribose] polymerase 2-B (PARP2-B) from Oryza sativa subsp. japonica (Rice).